The following is a 169-amino-acid chain: Thaumatin-like pathogenesis-related protein 4 (169 aa).

An N-terminal signal peptide occupies residues 1–21; sequence MATSSTVLFLLLAVFAASASA.

This sequence belongs to the thaumatin family.

Functionally, associated with resistance against stem rust fungi. This Avena sativa (Oat) protein is Thaumatin-like pathogenesis-related protein 4 (RASTL-4).